The primary structure comprises 170 residues: Adenine phosphoribosyltransferase (170 aa).

The protein belongs to the purine/pyrimidine phosphoribosyltransferase family. Homodimer.

Its subcellular location is the cytoplasm. It catalyses the reaction AMP + diphosphate = 5-phospho-alpha-D-ribose 1-diphosphate + adenine. Its pathway is purine metabolism; AMP biosynthesis via salvage pathway; AMP from adenine: step 1/1. In terms of biological role, catalyzes a salvage reaction resulting in the formation of AMP, that is energically less costly than de novo synthesis. This Fervidobacterium nodosum (strain ATCC 35602 / DSM 5306 / Rt17-B1) protein is Adenine phosphoribosyltransferase.